We begin with the raw amino-acid sequence, 137 residues long: Phosphoribosyl-AMP cyclohydrolase (137 aa).

Position 84 (Asp84) interacts with Mg(2+). Cys85 contributes to the Zn(2+) binding site. 2 residues coordinate Mg(2+): Asp86 and Asp88. Zn(2+) contacts are provided by Cys101 and Cys108.

Belongs to the PRA-CH family. As to quaternary structure, homodimer. Requires Mg(2+) as cofactor. Zn(2+) serves as cofactor.

The protein localises to the cytoplasm. It catalyses the reaction 1-(5-phospho-beta-D-ribosyl)-5'-AMP + H2O = 1-(5-phospho-beta-D-ribosyl)-5-[(5-phospho-beta-D-ribosylamino)methylideneamino]imidazole-4-carboxamide. It participates in amino-acid biosynthesis; L-histidine biosynthesis; L-histidine from 5-phospho-alpha-D-ribose 1-diphosphate: step 3/9. Catalyzes the hydrolysis of the adenine ring of phosphoribosyl-AMP. In Chlorobium phaeovibrioides (strain DSM 265 / 1930) (Prosthecochloris vibrioformis (strain DSM 265)), this protein is Phosphoribosyl-AMP cyclohydrolase.